The primary structure comprises 188 residues: MSYLVVTIKVILITGMPGSGKSEFAKLLKERGAKVIVMSDVVRKRYSIEAKPGERLMDFAKRLREIYGDGVVARLCVEELGTSNHDLVVFDGVRSLAEVEEFKRLLGDSVYIVAVHSPPKIRYKRMIERLRSDDSKEISELIRRDREELKLGIGEVIAMADYIITNDSNYEEFKRRCEEVTDRVLKNG.

ATP is bound at residue 15–22 (GMPGSGKS).

This sequence belongs to the UPF0200 family.

In Saccharolobus islandicus (strain M.16.27) (Sulfolobus islandicus), this protein is UPF0200 protein M1627_1244.